The following is a 439-amino-acid chain: Niacin transporter NiaP (439 aa).

Transmembrane regions (helical) follow at residues 20 to 40 (LWVV…IAFI), 57 to 77 (WIVS…GGLA), 84 to 104 (TVFA…AFAP), 108 to 128 (WLLA…PVAV), 143 to 163 (FIVL…LVSY), 169 to 189 (FGWH…YVII), 253 to 273 (LMLW…FTWL), 288 to 308 (FEYV…AAWL), 316 to 336 (ATLA…GQAD), 338 to 358 (VFNI…AWGV), 374 to 394 (FGAG…PIVV), and 407 to 427 (VFMM…ILGE).

Belongs to the major facilitator superfamily. Sugar transporter (TC 2.A.1.1) family.

It localises to the cell inner membrane. Functions as a high-affinity transporter of niacin (nicotinamide or nicotinate). Probably substantially contributes to niacin transport when its concentration in the medium is very low. This is Niacin transporter NiaP from Acinetobacter baylyi (strain ATCC 33305 / BD413 / ADP1).